Reading from the N-terminus, the 533-residue chain is Adenine deaminase (533 aa).

It belongs to the metallo-dependent hydrolases superfamily. Adenine deaminase family. The cofactor is Mn(2+).

It catalyses the reaction adenine + H2O + H(+) = hypoxanthine + NH4(+). This chain is Adenine deaminase, found in Sulfurovum sp. (strain NBC37-1).